Reading from the N-terminus, the 678-residue chain is DNA ligase (678 aa).

Residues 34–38, 83–84, and E114 each bind NAD(+); these read DSEYD and SL. The N6-AMP-lysine intermediate role is filled by K116. Positions 137, 176, 293, and 317 each coordinate NAD(+). 4 residues coordinate Zn(2+): C411, C414, C429, and C435. The region spanning 594–678 is the BRCT domain; it reads PTRQPLNGES…LMAGYGQTLS (85 aa).

It belongs to the NAD-dependent DNA ligase family. LigA subfamily. Requires Mg(2+) as cofactor. Mn(2+) is required as a cofactor.

The catalysed reaction is NAD(+) + (deoxyribonucleotide)n-3'-hydroxyl + 5'-phospho-(deoxyribonucleotide)m = (deoxyribonucleotide)n+m + AMP + beta-nicotinamide D-nucleotide.. Its function is as follows. DNA ligase that catalyzes the formation of phosphodiester linkages between 5'-phosphoryl and 3'-hydroxyl groups in double-stranded DNA using NAD as a coenzyme and as the energy source for the reaction. It is essential for DNA replication and repair of damaged DNA. In Acinetobacter baumannii (strain AB307-0294), this protein is DNA ligase.